The following is a 364-amino-acid chain: Anthranilate phosphoribosyltransferase 1 (364 aa).

Residues Gly-102, 105-106 (GD), Thr-110, 112-115 (NIST), 130-138 (KHGNRSASS), and Ser-142 contribute to the 5-phospho-alpha-D-ribose 1-diphosphate site. Residue Gly-102 coordinates anthranilate. Ser-114 provides a ligand contact to Mg(2+). Asn-133 provides a ligand contact to anthranilate. Arg-188 serves as a coordination point for anthranilate. The Mg(2+) site is built by Asp-247 and Glu-248.

It belongs to the anthranilate phosphoribosyltransferase family. Homodimer. Requires Mg(2+) as cofactor.

The catalysed reaction is N-(5-phospho-beta-D-ribosyl)anthranilate + diphosphate = 5-phospho-alpha-D-ribose 1-diphosphate + anthranilate. It participates in amino-acid biosynthesis; L-tryptophan biosynthesis; L-tryptophan from chorismate: step 2/5. In terms of biological role, catalyzes the transfer of the phosphoribosyl group of 5-phosphorylribose-1-pyrophosphate (PRPP) to anthranilate to yield N-(5'-phosphoribosyl)-anthranilate (PRA). The chain is Anthranilate phosphoribosyltransferase 1 from Nostoc sp. (strain PCC 7120 / SAG 25.82 / UTEX 2576).